A 395-amino-acid chain; its full sequence is Cysteine synthase 2 (395 aa).

Residues 6–22 (QDLASGIAMGAVFMYLL) traverse the membrane as a helical segment. An N6-(pyridoxal phosphate)lysine modification is found at Lys83. Pyridoxal 5'-phosphate is bound by residues 228–232 (GTGGT) and Ser335.

It belongs to the cysteine synthase/cystathionine beta-synthase family. Pyridoxal 5'-phosphate is required as a cofactor.

Its subcellular location is the mitochondrion. The protein localises to the mitochondrion outer membrane. It catalyses the reaction O-acetyl-L-serine + hydrogen sulfide = L-cysteine + acetate. Putative cysteine synthase that catalyzes the conversion of O-acetyl-L-serine (OAS) into cysteine, the last step in the cysteine biosynthesis pathway. However, in contrast to cysteine synthase cys11, this CS-like protein seems not to function in cysteine biosynthesis, at least under normal growth conditions, although the transcript is produced. This Schizosaccharomyces pombe (strain 972 / ATCC 24843) (Fission yeast) protein is Cysteine synthase 2 (cys12).